Here is a 132-residue protein sequence, read N- to C-terminus: CLAVATA3/ESR (CLE)-related protein ESR2 (132 aa).

The signal sequence occupies residues 1-26 (MASRMGMVAIVSLFVCALVASTSVNA). The tract at residues 68–132 (NRASKQLDSE…IGPPPFLDRY (65 aa)) is disordered. A hydroxyproline mark is found at proline 82 and proline 85. The O-linked (Ara...) hydroxyproline glycan is linked to proline 85. The segment covering 123–132 (IGPPPFLDRY) has biased composition (pro residues).

This sequence belongs to the CLV3/ESR signal peptide family. The O-glycosylation (arabinosylation) of the hydroxyproline Pro-85 enhances binding affinity of the ESR2p peptide for its receptor. Seed endosperm.

It localises to the secreted. The protein localises to the extracellular space. Its function is as follows. Extracellular signal peptide that regulates cell fate. The polypeptide is CLAVATA3/ESR (CLE)-related protein ESR2 (Zea mays (Maize)).